The chain runs to 437 residues: Serine hydroxymethyltransferase (437 aa).

(6S)-5,6,7,8-tetrahydrofolate contacts are provided by residues leucine 130 and 134–136 (GHL). Lysine 239 is modified (N6-(pyridoxal phosphate)lysine).

This sequence belongs to the SHMT family. Homodimer. Requires pyridoxal 5'-phosphate as cofactor.

It localises to the cytoplasm. The catalysed reaction is (6R)-5,10-methylene-5,6,7,8-tetrahydrofolate + glycine + H2O = (6S)-5,6,7,8-tetrahydrofolate + L-serine. The protein operates within one-carbon metabolism; tetrahydrofolate interconversion. Its pathway is amino-acid biosynthesis; glycine biosynthesis; glycine from L-serine: step 1/1. Functionally, catalyzes the reversible interconversion of serine and glycine with tetrahydrofolate (THF) serving as the one-carbon carrier. This reaction serves as the major source of one-carbon groups required for the biosynthesis of purines, thymidylate, methionine, and other important biomolecules. Also exhibits THF-independent aldolase activity toward beta-hydroxyamino acids, producing glycine and aldehydes, via a retro-aldol mechanism. The sequence is that of Serine hydroxymethyltransferase from Bartonella tribocorum (strain CIP 105476 / IBS 506).